The following is a 228-amino-acid chain: 7-cyano-7-deazaguanine synthase (228 aa).

Residue 11-21 (LSGGLDSATCL) coordinates ATP. Positions 191, 201, 204, and 207 each coordinate Zn(2+).

This sequence belongs to the QueC family. It depends on Zn(2+) as a cofactor.

It carries out the reaction 7-carboxy-7-deazaguanine + NH4(+) + ATP = 7-cyano-7-deazaguanine + ADP + phosphate + H2O + H(+). It functions in the pathway purine metabolism; 7-cyano-7-deazaguanine biosynthesis. Functionally, catalyzes the ATP-dependent conversion of 7-carboxy-7-deazaguanine (CDG) to 7-cyano-7-deazaguanine (preQ(0)). This Azoarcus sp. (strain BH72) protein is 7-cyano-7-deazaguanine synthase.